The chain runs to 888 residues: Kinesin-like protein KIF20A (888 aa).

N-acetylserine is present on Ser2. Residues Ser7, Ser14, and Ser21 each carry the phosphoserine modification. The Kinesin motor domain occupies 63 to 506 (KVKVYLRVRP…AKFSAIASQL (444 aa)). Residue 159-166 (GVTNSGKT) coordinates ATP. Ser527 is subject to Phosphoserine; by PLK1. A Phosphoserine modification is found at Ser531. Coiled coils occupy residues 559–587 (KEEL…EVQL) and 630–760 (ESLT…ERAC). 3 positions are modified to phosphoserine: Ser667, Ser683, and Ser823. Residues 761-888 (CHNTGAGKLR…LKSGPFGKKY (128 aa)) form a globular region. The disordered stretch occupies residues 823 to 863 (STKKRLGANQENQQPNQQPPGKKPFLRNLLPRTPTCQSSTD). Residue Thr855 is modified to Phosphothreonine. A phosphoserine mark is found at Ser865, Ser876, and Ser881.

Belongs to the TRAFAC class myosin-kinesin ATPase superfamily. Kinesin family. Phosphorylated by PLK1 at Ser-527 during mitosis, creating a docking site for PLK1 and recruiting PLK1 at central spindle.

Its subcellular location is the golgi apparatus. It localises to the cytoplasm. The protein localises to the cytoskeleton. It is found in the spindle. Functionally, mitotic kinesin required for chromosome passenger complex (CPC)-mediated cytokinesis. Following phosphorylation by PLK1, involved in recruitment of PLK1 to the central spindle. Interacts with guanosine triphosphate (GTP)-bound forms of RAB6A and RAB6B. May act as a motor required for the retrograde RAB6 regulated transport of Golgi membranes and associated vesicles along microtubules. Has a microtubule plus end-directed motility. The sequence is that of Kinesin-like protein KIF20A (KIF20A) from Bos taurus (Bovine).